A 60-amino-acid polypeptide reads, in one-letter code: Large ribosomal subunit protein bL32 (60 aa).

A compositionally biased stretch (basic residues) spans 1-20; sequence MAVQKSRKSRSRRDMRRSHH. Positions 1–60 are disordered; it reads MAVQKSRKSRSRRDMRRSHHHMEVAELSIDATTGEKHRRHHMTKDGFYRGRQLFKASQED.

This sequence belongs to the bacterial ribosomal protein bL32 family.

This is Large ribosomal subunit protein bL32 from Psychrobacter sp. (strain PRwf-1).